A 303-amino-acid polypeptide reads, in one-letter code: Coenzyme PQQ synthesis protein B (303 aa).

It belongs to the PqqB family.

It functions in the pathway cofactor biosynthesis; pyrroloquinoline quinone biosynthesis. May be involved in the transport of PQQ or its precursor to the periplasm. The sequence is that of Coenzyme PQQ synthesis protein B from Pseudomonas entomophila (strain L48).